Here is a 239-residue protein sequence, read N- to C-terminus: Homeobox-leucine zipper protein HOX12 (239 aa).

Residues 25 to 65 (ATSGGEQKKARQRRRRKVKPEAAAALAGESGGDEQAKKRRL) form a disordered region. Residues 58–117 (EQAKKRRLSDEQARFLEMSFKKERKLETPRKVQLAAELGLDAKQVAVWFQNRRARHKSKL) constitute a DNA-binding region (homeobox). Positions 107 to 168 (QNRRARHKSK…KLAAVAAATT (62 aa)) form a coiled coil.

Belongs to the HD-ZIP homeobox family. Class I subfamily. As to expression, expressed in seedlings, roots, stems, leaf sheaths and panicles.

It is found in the nucleus. Its function is as follows. Probable transcription factor. The sequence is that of Homeobox-leucine zipper protein HOX12 (HOX12) from Oryza sativa subsp. japonica (Rice).